A 135-amino-acid chain; its full sequence is Small ribosomal subunit protein uS12c (135 aa).

This sequence belongs to the universal ribosomal protein uS12 family. As to quaternary structure, part of the 30S ribosomal subunit.

It is found in the plastid. The protein resides in the chloroplast. In terms of biological role, with S4 and S5 plays an important role in translational accuracy. Located at the interface of the 30S and 50S subunits. The polypeptide is Small ribosomal subunit protein uS12c (rps12) (Adiantum capillus-veneris (Maidenhair fern)).